A 266-amino-acid chain; its full sequence is Undecaprenyl-diphosphatase (266 aa).

Transmembrane regions (helical) follow at residues 38–58 (SDMFNIVIQAGAILAVTIIYW), 80–100 (LIVAFLITAVLGLVVKKVLHF), 108–128 (PIAWALIIGGFWMIFAEWAAA), 136–156 (ITWLVAILVGIAQIVAGIFPG), 176–196 (AAATEFAFLVGIPTMYAASGY), 217–237 (IAFVVSTIVAFIAVKWLLAYI), and 245–265 (FAVYRIILGVLLLGMAATGLI).

This sequence belongs to the UppP family.

It is found in the cell inner membrane. It carries out the reaction di-trans,octa-cis-undecaprenyl diphosphate + H2O = di-trans,octa-cis-undecaprenyl phosphate + phosphate + H(+). Catalyzes the dephosphorylation of undecaprenyl diphosphate (UPP). Confers resistance to bacitracin. In Rhizobium leguminosarum bv. trifolii (strain WSM2304), this protein is Undecaprenyl-diphosphatase.